A 377-amino-acid polypeptide reads, in one-letter code: Trans-enoyl reductase FMN2 (377 aa).

The Enoyl reductase (ER) domain occupies 7–370 (NASGGYCLNS…DGVIRGKKLV (364 aa)). The segment at 143-173 (LSDMTGNGRSNGYTNGHTNGHTNGHSKGEEE) is disordered. Over residues 144–155 (SDMTGNGRSNGY) the composition is skewed to polar residues. Residues 156 to 167 (TNGHTNGHTNGH) are compositionally biased toward low complexity. NADP(+) contacts are provided by residues 186 to 189 (ASAS), 209 to 212 (SPAN), tyrosine 227, and 274 to 275 (LD).

Belongs to the zinc-containing alcohol dehydrogenase family.

The protein operates within secondary metabolite biosynthesis. Its function is as follows. Trans-enoyl reductase; part of the gene cluster that mediates the biosynthesis of fusamarins, isocoumarin derivatives that show moderate cytotoxicity with IC(50) values between 1 and 50 uM. The polyketide synthase FMN1 probably synthesizes two different polyketides, a tetra- and a pentaketide, containinga varying number of double bonds depending on the selective actions of the trans-enoyl reductase FMN2. Chain fusion will presumably be mediated by the KS domain before finally offloading is catalyzed by the alpha/beta hydrolase fold enzyme FMN3. The chain is Trans-enoyl reductase FMN2 from Fusarium mangiferae (Mango malformation disease fungus).